The chain runs to 631 residues: tRNA uridine 5-carboxymethylaminomethyl modification enzyme MnmG (631 aa).

Residue 13–18 coordinates FAD; the sequence is GGGHAG. 273–287 serves as a coordination point for NAD(+); that stretch reads GPRYCPSIEDKVNRF.

Belongs to the MnmG family. Homodimer. Heterotetramer of two MnmE and two MnmG subunits. Requires FAD as cofactor.

The protein resides in the cytoplasm. NAD-binding protein involved in the addition of a carboxymethylaminomethyl (cmnm) group at the wobble position (U34) of certain tRNAs, forming tRNA-cmnm(5)s(2)U34. The polypeptide is tRNA uridine 5-carboxymethylaminomethyl modification enzyme MnmG (Chromohalobacter salexigens (strain ATCC BAA-138 / DSM 3043 / CIP 106854 / NCIMB 13768 / 1H11)).